Here is a 373-residue protein sequence, read N- to C-terminus: MSKVALITGVTGQDGSYLAEFLLEKGYEVHGIKRRASSFNTERVDHIYQDPHTCNPKFHLHYGDLSDTSNLTRILREVQPDEVYNLGAMSHVAVSFESPEYTADVDAMGTLRLLEAIRFLGLEKKTRFYQASTSELYGLVQEIPQKETTPFYPRSPYAVAKLYAYWITVNYRESYGMYACNGILFNHESPRRGETFVTRKITRAIANIAQGLESCLYLGNMDSLRDWGHAKDYVKMQWMMLQQEQPEDFVIATGVQYSVRQFVEMAAAQLGIKLRFEGTGVEEKGIVVSVTGHDAPGVKPGDVIIAVDPRYFRPAEVETLLGDPTKAHEKLGWKPEITLREMVSEMVANDLEAAKKHSLLKSHGYDVAIALES.

NADP(+) contacts are provided by residues 9–14 (GVTGQD), 64–65 (DL), 86–90 (LGAMS), and Tyr101. Residue Thr133 is part of the active site. Residues Glu135 and Tyr157 each act as nucleophile in the active site. The NADP(+) site is built by Lys161, His187, and Arg192.

Belongs to the NAD(P)-dependent epimerase/dehydratase family. GDP-mannose 4,6-dehydratase subfamily. It depends on NADP(+) as a cofactor.

It carries out the reaction GDP-alpha-D-mannose = GDP-4-dehydro-alpha-D-rhamnose + H2O. It functions in the pathway nucleotide-sugar biosynthesis; GDP-L-fucose biosynthesis via de novo pathway; GDP-L-fucose from GDP-alpha-D-mannose: step 1/2. Functionally, catalyzes the conversion of GDP-D-mannose to GDP-4-dehydro-6-deoxy-D-mannose. This is GDP-mannose 4,6-dehydratase from Escherichia coli O157:H7.